The chain runs to 249 residues: Isoprenyl transferase (249 aa).

Asp25 is a catalytic residue. Residue Asp25 participates in Mg(2+) binding. Residues 26–29, Trp30, Arg38, His42, and 70–72 contribute to the substrate site; these read GNGR and STE. Asn73 (proton acceptor) is an active-site residue. Residues Trp74, Arg76, Arg197, and 203-205 each bind substrate; that span reads RLS. Glu216 is a binding site for Mg(2+).

The protein belongs to the UPP synthase family. Homodimer. Mg(2+) serves as cofactor.

In terms of biological role, catalyzes the condensation of isopentenyl diphosphate (IPP) with allylic pyrophosphates generating different type of terpenoids. In Streptococcus mutans serotype c (strain ATCC 700610 / UA159), this protein is Isoprenyl transferase.